The following is a 301-amino-acid chain: Mitochondrial substrate carrier family protein Z (301 aa).

Over 1–19 (MTGKEENKQQQHVNFPWKR) the chain is Mitochondrial intermembrane. Solcar repeat units follow at residues 14 to 101 (NFPW…FTEQ), 116 to 200 (QQFG…ISDY), and 210 to 293 (LPVW…VMGI). Residues 20–37 (LVAGAVAGTADVWACHPL) traverse the membrane as a helical segment. The Mitochondrial matrix segment spans residues 38–65 (DRIKTQLQNNPGKSIVGTFGDIVSKGKG). The chain crosses the membrane as a helical span at residues 66-86 (FTGGVNALYEGILPMTAEAIF). Residues 87–117 (KVGIRYFAFSWFTEQYKTTVYKGETLNKKQQ) are Mitochondrial intermembrane-facing. The helical transmembrane segment at 118–138 (FGANLLGGAFAGTIESFVVVI) threads the bilayer. The Mitochondrial matrix segment spans residues 139-174 (PCELLKVRHMTQEHNKSFGTVFRDVLREEGFQGLYK). Residues 175–191 (GGSATLLRQITNHMIRF) traverse the membrane as a helical segment. The Mitochondrial intermembrane segment spans residues 192–212 (PTFYAISDYLKGGDHSVHLPV). The chain crosses the membrane as a helical span at residues 213-229 (WQNLSAGAIAGTASTLF). The Mitochondrial matrix segment spans residues 230 to 275 (NNPLDTIKTRMQKQGQNQTTMQVVRGIYQETGVKGYWAGVIPRILR). Residues 276–296 (VAPGQAITWAVVELVMGILEP) form a helical membrane-spanning segment. The Mitochondrial intermembrane portion of the chain corresponds to 297–301 (SSKKH).

This sequence belongs to the mitochondrial carrier (TC 2.A.29) family.

It is found in the mitochondrion inner membrane. In terms of biological role, mitochondrial solute carriers shuttle metabolites, nucleotides, and cofactors through the mitochondrial inner membrane. This is Mitochondrial substrate carrier family protein Z (mcfZ) from Dictyostelium discoideum (Social amoeba).